The sequence spans 355 residues: UDP-N-acetylglucosamine--N-acetylmuramyl-(pentapeptide) pyrophosphoryl-undecaprenol N-acetylglucosamine transferase (355 aa).

UDP-N-acetyl-alpha-D-glucosamine is bound by residues 15-17 (TGG), asparagine 127, arginine 163, serine 191, isoleucine 244, 263-268 (ALTVSE), and glutamine 288.

This sequence belongs to the glycosyltransferase 28 family. MurG subfamily.

Its subcellular location is the cell inner membrane. It carries out the reaction di-trans,octa-cis-undecaprenyl diphospho-N-acetyl-alpha-D-muramoyl-L-alanyl-D-glutamyl-meso-2,6-diaminopimeloyl-D-alanyl-D-alanine + UDP-N-acetyl-alpha-D-glucosamine = di-trans,octa-cis-undecaprenyl diphospho-[N-acetyl-alpha-D-glucosaminyl-(1-&gt;4)]-N-acetyl-alpha-D-muramoyl-L-alanyl-D-glutamyl-meso-2,6-diaminopimeloyl-D-alanyl-D-alanine + UDP + H(+). It participates in cell wall biogenesis; peptidoglycan biosynthesis. Functionally, cell wall formation. Catalyzes the transfer of a GlcNAc subunit on undecaprenyl-pyrophosphoryl-MurNAc-pentapeptide (lipid intermediate I) to form undecaprenyl-pyrophosphoryl-MurNAc-(pentapeptide)GlcNAc (lipid intermediate II). The polypeptide is UDP-N-acetylglucosamine--N-acetylmuramyl-(pentapeptide) pyrophosphoryl-undecaprenol N-acetylglucosamine transferase (Escherichia coli O127:H6 (strain E2348/69 / EPEC)).